A 282-amino-acid polypeptide reads, in one-letter code: Putative phosphatase in upp 3'region (282 aa).

The Nucleophile role is filled by D17. Mg(2+) is bound at residue D17. L18 lines the phosphate pocket. D19 contacts Mg(2+). Phosphate-binding positions include 53–54 (TG) and K211. Residues D234 and S235 each contribute to the Mg(2+) site. N237 is a binding site for phosphate.

It belongs to the HAD-like hydrolase superfamily. Cof family. Requires Mg(2+) as cofactor.

In Metamycoplasma hominis (Mycoplasma hominis), this protein is Putative phosphatase in upp 3'region.